The following is a 291-amino-acid chain: 3-methyl-2-oxobutanoate hydroxymethyltransferase (291 aa).

Polar residues predominate over residues 1–10; sequence MTQLSAAQTP. Positions 1 to 20 are disordered; the sequence is MTQLSAAQTPQPKPADGNRA. The Mg(2+) site is built by aspartate 71 and aspartate 110. Residues 71–72, aspartate 110, and lysine 140 contribute to the 3-methyl-2-oxobutanoate site; that span reads DS. Residue glutamate 142 participates in Mg(2+) binding. Glutamate 208 (proton acceptor) is an active-site residue.

This sequence belongs to the PanB family. Homodecamer; pentamer of dimers. Mg(2+) serves as cofactor.

The protein resides in the cytoplasm. The enzyme catalyses 3-methyl-2-oxobutanoate + (6R)-5,10-methylene-5,6,7,8-tetrahydrofolate + H2O = 2-dehydropantoate + (6S)-5,6,7,8-tetrahydrofolate. Its pathway is cofactor biosynthesis; (R)-pantothenate biosynthesis; (R)-pantoate from 3-methyl-2-oxobutanoate: step 1/2. Catalyzes the reversible reaction in which hydroxymethyl group from 5,10-methylenetetrahydrofolate is transferred onto alpha-ketoisovalerate to form ketopantoate. The sequence is that of 3-methyl-2-oxobutanoate hydroxymethyltransferase from Streptomyces coelicolor (strain ATCC BAA-471 / A3(2) / M145).